The chain runs to 147 residues: Hemoglobin subunit epsilon (147 aa).

In terms of domain architecture, Globin spans 3 to 147; it reads HLTAEEKSSV…VATALAHKYH (145 aa). Ser-14 and Ser-51 each carry phosphoserine. Heme b is bound by residues His-64 and His-93.

It belongs to the globin family. As to quaternary structure, heterotetramer of two alpha chains and two epsilon chains in early embryonic hemoglobin Gower-2; two zeta chains and two epsilon chains in early embryonic hemoglobin Gower-1. Red blood cells.

Its function is as follows. The epsilon chain is a beta-type chain of early mammalian embryonic hemoglobin. The polypeptide is Hemoglobin subunit epsilon (HBE1) (Carlito syrichta (Philippine tarsier)).